The chain runs to 173 residues: Photosystem I assembly protein Ycf3 (173 aa).

TPR repeat units follow at residues 35–68, 72–105, and 113–146; these read AFAY…EEDP, SYIL…NPRM, and AVIY…WKRA.

Belongs to the Ycf3 family.

The protein resides in the cellular thylakoid membrane. Essential for the assembly of the photosystem I (PSI) complex. May act as a chaperone-like factor to guide the assembly of the PSI subunits. The polypeptide is Photosystem I assembly protein Ycf3 (Thermosynechococcus vestitus (strain NIES-2133 / IAM M-273 / BP-1)).